Consider the following 145-residue polypeptide: Hemoglobin subunit beta (145 aa).

The Globin domain occupies 1–145 (MLTAEEKAAV…VANALAHRYH (145 aa)). At Thr-11 the chain carries Phosphothreonine. Lys-58 carries the N6-acetyllysine modification. His-62 lines the heme b pocket. Lys-81 is modified (N6-acetyllysine). His-91 is a heme b binding site. Cys-92 bears the S-nitrosocysteine mark.

It belongs to the globin family. As to quaternary structure, heterotetramer of two alpha chains and two beta chains. Red blood cells.

Functionally, involved in oxygen transport from the lung to the various peripheral tissues. The chain is Hemoglobin subunit beta (HBB) from Alces alces alces (European moose).